We begin with the raw amino-acid sequence, 218 residues long: Ribosomal RNA small subunit methyltransferase J (218 aa).

S-adenosyl-L-methionine contacts are provided by residues 55–56 (RD), 71–72 (ER), and Asp123.

The protein belongs to the methyltransferase superfamily. RsmJ family.

It localises to the cytoplasm. The catalysed reaction is guanosine(1516) in 16S rRNA + S-adenosyl-L-methionine = N(2)-methylguanosine(1516) in 16S rRNA + S-adenosyl-L-homocysteine + H(+). In terms of biological role, specifically methylates the guanosine in position 1516 of 16S rRNA. This chain is Ribosomal RNA small subunit methyltransferase J, found in Rhodopseudomonas palustris (strain HaA2).